The primary structure comprises 29 residues: Trypsin inhibitor 4 (29 aa).

Intrachain disulfides connect C3–C20, C10–C22, and C16–C28.

This sequence belongs to the protease inhibitor I7 (squash-type serine protease inhibitor) family.

It is found in the secreted. In terms of biological role, strongly inhibits trypsin, weakly inhibits chymotrypsin. The sequence is that of Trypsin inhibitor 4 from Cyclanthera pedata (Achocha).